Reading from the N-terminus, the 1107-residue chain is Integrator complex subunit 6 homolog (1107 aa).

The 194-residue stretch at 2–195 folds into the VWFA domain; sequence LITFVVDTSG…LPMEPAIAPM (194 aa). Disordered stretches follow at residues 454-515, 542-572, 629-801, 818-861, and 946-1034; these read RIIN…SGNL, DNETSENSELSQELSESSTTGSSGGGSSSNI, TLRD…VSSP, QISS…IVNN, and VVRP…TTPN. 2 stretches are compositionally biased toward low complexity: residues 460-513 and 546-562; these read QQQQ…SGSG and SENSELSQELSESSTTG. Residues 629-639 show a composition bias toward basic and acidic residues; the sequence is TLRDIDDDKKP. A compositionally biased stretch (low complexity) spans 693 to 801; sequence PSLPTLNSLS…PIPSTTVSSP (109 aa). Positions 846–857 are enriched in pro residues; that stretch reads SPPPPPPPPPLP. Residues 956 to 975 show a composition bias toward low complexity; sequence PLTIDTLTSSSSSSTIPTTT. Residues 976–996 show a composition bias toward polar residues; that stretch reads NGSLSTHDTPNTSPTLSSINY. A compositionally biased stretch (low complexity) spans 997–1034; the sequence is NNNNNNNNNNNNNNNNNNNNNNNNNNRKNSIITTTTPN. One can recognise an MIF4G domain in the interval 1041–1103; sequence IKFVHKEIRR…SLISKLIGYI (63 aa).

It belongs to the Integrator subunit 6 family. In terms of assembly, component of the Integrator complex. The core complex associates with protein phosphatase 2A subunits, to form the Integrator-PP2A (INTAC) complex.

It localises to the nucleus. It is found in the chromosome. Its function is as follows. Component of the integrator complex, a multiprotein complex that terminates RNA polymerase II (Pol II) transcription in the promoter-proximal region of genes. The integrator complex provides a quality checkpoint during transcription elongation by driving premature transcription termination of transcripts that are unfavorably configured for transcriptional elongation: the complex terminates transcription by (1) catalyzing dephosphorylation of the C-terminal domain (CTD) of Pol II subunit polr2a, (2) degrading the exiting nascent RNA transcript via endonuclease activity and (3) promoting the release of Pol II from bound DNA. The integrator complex is also involved in terminating the synthesis of non-coding Pol II transcripts, such as enhancer RNAs (eRNAs), small nuclear RNAs (snRNAs), telomerase RNAs and long non-coding RNAs (lncRNAs). Within the integrator complex, INTS6 acts as a molecular adapter that promotes assembly of protein phosphatase 2A (PP2A) subunits to the integrator core complex, promoting recruitment of PP2A to transcription pause-release checkpoint. This chain is Integrator complex subunit 6 homolog (ints6), found in Dictyostelium discoideum (Social amoeba).